Here is a 350-residue protein sequence, read N- to C-terminus: Biotin synthase (350 aa).

Residues 41–268 (NEVQISRLLS…KSRVRLSAGR (228 aa)) form the Radical SAM core domain. [4Fe-4S] cluster contacts are provided by Cys-56, Cys-60, and Cys-63. [2Fe-2S] cluster contacts are provided by Cys-100, Cys-131, Cys-191, and Arg-263.

The protein belongs to the radical SAM superfamily. Biotin synthase family. As to quaternary structure, homodimer. It depends on [4Fe-4S] cluster as a cofactor. [2Fe-2S] cluster is required as a cofactor.

The enzyme catalyses (4R,5S)-dethiobiotin + (sulfur carrier)-SH + 2 reduced [2Fe-2S]-[ferredoxin] + 2 S-adenosyl-L-methionine = (sulfur carrier)-H + biotin + 2 5'-deoxyadenosine + 2 L-methionine + 2 oxidized [2Fe-2S]-[ferredoxin]. It participates in cofactor biosynthesis; biotin biosynthesis; biotin from 7,8-diaminononanoate: step 2/2. Functionally, catalyzes the conversion of dethiobiotin (DTB) to biotin by the insertion of a sulfur atom into dethiobiotin via a radical-based mechanism. The protein is Biotin synthase of Shewanella halifaxensis (strain HAW-EB4).